A 293-amino-acid chain; its full sequence is 33 kDa chaperonin (293 aa).

2 cysteine pairs are disulfide-bonded: C237–C239 and C271–C274.

The protein belongs to the HSP33 family. Post-translationally, under oxidizing conditions two disulfide bonds are formed involving the reactive cysteines. Under reducing conditions zinc is bound to the reactive cysteines and the protein is inactive.

It localises to the cytoplasm. In terms of biological role, redox regulated molecular chaperone. Protects both thermally unfolding and oxidatively damaged proteins from irreversible aggregation. Plays an important role in the bacterial defense system toward oxidative stress. The polypeptide is 33 kDa chaperonin (Haemophilus influenzae (strain ATCC 51907 / DSM 11121 / KW20 / Rd)).